Consider the following 515-residue polypeptide: Glucose-6-phosphate 1-dehydrogenase (515 aa).

Residue alanine 2 is modified to N-acetylalanine. Serine 8 bears the Phosphoserine mark. Threonine 10 carries the post-translational modification Phosphothreonine. NADP(+) is bound at residue 38–45 (GASGDLAK). Lysine 89 is subject to N6-acetyllysine. 2 residues coordinate NADP(+): tyrosine 147 and lysine 171. D-glucose 6-phosphate-binding positions include lysine 171, 201–205 (HYLGK), glutamate 239, and glutamate 258. N6-(2-hydroxyisobutyryl)lysine; alternate is present on lysine 171. Lysine 171 bears the N6-acetyllysine; alternate mark. An NADP(+)-binding site is contributed by arginine 357. Residues lysine 360 and arginine 365 each contribute to the D-glucose 6-phosphate site. Lysine 366, arginine 370, and arginine 393 together coordinate NADP(+). Glutamine 395 contributes to the D-glucose 6-phosphate binding site. NADP(+) is bound by residues 401–403 (YTK) and 421–423 (DLT). The residue at position 403 (lysine 403) is an N6-acetyllysine. Lysine 432 carries the post-translational modification N6-acetyllysine. Residue arginine 487 coordinates NADP(+). Lysine 497 carries the N6-acetyllysine modification. The NADP(+) site is built by tyrosine 503 and tryptophan 509. A Phosphotyrosine modification is found at tyrosine 503.

It belongs to the glucose-6-phosphate dehydrogenase family. Homotetramer; dimer of dimers. Interacts with SIRT2; the interaction is enhanced by H(2)O(2) treatment. Forms a ternary complex with ALDOB and TP53; this interaction is direct. ALDOB stabilizes the complex inhibiting G6PD activity and keeping oxidative pentose phosphate metabolism in check. Acetylated by ELP3 at Lys-403; acetylation inhibits its homodimerization and enzyme activity. Deacetylated by SIRT2 at Lys-403; deacetylation stimulates its enzyme activity.

It localises to the cytoplasm. The protein resides in the cytosol. Its subcellular location is the membrane. The enzyme catalyses D-glucose 6-phosphate + NADP(+) = 6-phospho-D-glucono-1,5-lactone + NADPH + H(+). The protein operates within carbohydrate degradation; pentose phosphate pathway; D-ribulose 5-phosphate from D-glucose 6-phosphate (oxidative stage): step 1/3. Functionally, cytosolic glucose-6-phosphate dehydrogenase that catalyzes the first and rate-limiting step of the oxidative branch within the pentose phosphate pathway/shunt, an alternative route to glycolysis for the dissimilation of carbohydrates and a major source of reducing power and metabolic intermediates for fatty acid and nucleic acid biosynthetic processes. The sequence is that of Glucose-6-phosphate 1-dehydrogenase (G6PD) from Bos indicus (Zebu).